The following is a 129-amino-acid chain: Large ribosomal subunit protein uL22 (129 aa).

Belongs to the universal ribosomal protein uL22 family. Part of the 50S ribosomal subunit.

Functionally, this protein binds specifically to 23S rRNA; its binding is stimulated by other ribosomal proteins, e.g. L4, L17, and L20. It is important during the early stages of 50S assembly. It makes multiple contacts with different domains of the 23S rRNA in the assembled 50S subunit and ribosome. In terms of biological role, the globular domain of the protein is located near the polypeptide exit tunnel on the outside of the subunit, while an extended beta-hairpin is found that lines the wall of the exit tunnel in the center of the 70S ribosome. The chain is Large ribosomal subunit protein uL22 from Phytoplasma sp. (strain STRAWB2).